The chain runs to 527 residues: N-acetylglutamate synthase, mitochondrial (527 aa).

Residues 1–39 (MAKVNSGSSGCRAMVMAGQFWTKPFALSSQRSGPHRRSA) constitute a mitochondrion transit peptide. Residues 28-65 (SSQRSGPHRRSAAEVNRRMSSSRTAGHGSKTPLWSQQE) form a disordered region. The may stabilize the oligomeric structure stretch occupies residues 40 to 83 (AEVNRRMSSSRTAGHGSKTPLWSQQESYNHSSLGERSAWSNRTL). Residues 40 to 361 (AEVNRRMSSS…SGTLFKNGDP (322 aa)) are amino-acid kinase domain (AAK). In terms of domain architecture, N-acetyltransferase spans 360–511 (DPIRRYSSLE…FAKSHPDSFC (152 aa)). Substrate is bound by residues Lys386, Lys429, and 459 to 464 (RSRTTN).

This sequence belongs to the acetyltransferase family. In terms of assembly, homodimer. Homotetramer.

The protein resides in the mitochondrion matrix. The catalysed reaction is L-glutamate + acetyl-CoA = N-acetyl-L-glutamate + CoA + H(+). Its activity is regulated as follows. Inhibited by L-arginine. Plays a role in the regulation of ureagenesis by producing the essential cofactor N-acetylglutamate (NAG), thus modulating carbamoylphosphate synthase I (cps1) activity. The polypeptide is N-acetylglutamate synthase, mitochondrial (Danio rerio (Zebrafish)).